Here is a 469-residue protein sequence, read N- to C-terminus: Protein RUFY3 (469 aa).

2 positions are modified to phosphothreonine: threonine 5 and threonine 12. 2 positions are modified to phosphoserine: serine 34 and serine 49. The residue at position 51 (threonine 51) is a Phosphothreonine. The RUN domain maps to 95-227 (DSDYAPLQQF…IDANFCMKGE (133 aa)). Coiled-coil stretches lie at residues 271 to 362 (NRHL…VEKE) and 422 to 463 (KSEL…AANK).

In terms of assembly, interacts with PAK1. Interacts (via C-terminus) with Ras-related Rab-5 proteins. Interacts (via C-terminus) with Ras-related Rap-2 proteins. Interacts with PIK3CA and PIK3R1. Interacts (via N-terminus) with FSCN1; this interaction induces neuron axon development. Interacts with DBN1. Interacts (via the second coiled coil) with GTP-, but not GDP-bound ARL8A and ARL8B. Interacts with dynactin/DCTN1 and the dynein intermediate chain DYNC1I1/2. Directly interacts with DYNC1LI1. In terms of processing, isoform 1 is partially phosphorylated. Phosphorylated by PAK1. Expressed in brain (at protein level).

It is found in the cytoplasm. The protein resides in the endomembrane system. Its subcellular location is the cell projection. It localises to the invadopodium. The protein localises to the growth cone. It is found in the perikaryon. The protein resides in the filopodium. Its subcellular location is the lamellipodium. It localises to the lysosome. Functionally, ARL8 effector that promotes the coupling of endolysosomes to dynein-dynactin for retrograde transport along microtubules. Acts by binding both GTP-bound ARL8 and dynein-dynactin. In nonneuronal cells, promotes concentration of endolysosomes in the juxtanuclear area. In hippocampal neurons, drives retrograde transport of endolysosomes from the axon to the soma. Plays a role in the generation of neuronal polarity formation and axon growth. Implicated in the formation of a single axon by developing neurons. May inhibit the formation of additional axons by inhibition of PI3K in minor neuronal processes. Plays a role in the formation of F-actin-enriched protrusive structures at the cell periphery. Plays a role in cytoskeletal organization by regulating the subcellular localization of FSCN1 and DBN1 at axonal growth cones. The protein is Protein RUFY3 of Rattus norvegicus (Rat).